Reading from the N-terminus, the 155-residue chain is Ribosome maturation factor RimP (155 aa).

Belongs to the RimP family.

The protein localises to the cytoplasm. Required for maturation of 30S ribosomal subunits. The chain is Ribosome maturation factor RimP from Lachnoclostridium phytofermentans (strain ATCC 700394 / DSM 18823 / ISDg) (Clostridium phytofermentans).